Consider the following 284-residue polypeptide: Stomatin (284 aa).

The Cytoplasmic portion of the chain corresponds to 1-31 (MSDKRQSSHVQSQRIPESFRENSKTELGACG). Serine 18 bears the Phosphoserine mark. Cysteine 30 is lipidated: S-palmitoyl cysteine. Residues 32–52 (WILVAASFFFVIITFPISIWI) lie within the membrane without spanning it. At 53 to 284 (CIKIVKEYER…MLQGIMGSNH (232 aa)) the chain is on the cytoplasmic side. A lipid anchor (S-palmitoyl cysteine) is attached at cysteine 87. Serine 161 and serine 244 each carry phosphoserine. Residues 265–273 (STIVFPLPV) are required for homooligomerization. The interval 267–269 (IVF) is required for lipid raft association. Residues 273 to 284 (VDMLQGIMGSNH) are interaction with LANCL1.

Belongs to the band 7/mec-2 family. In terms of assembly, interacts with LANCL1. Interacts with SLC2A1. Interacts with SLC4A1; this interaction positively regulates SLC4A1 activity. Identified in large complexes with SLC40A1, SLC14A1, SLC29A1 and AQP1. Homodimer and higher order homooligomers. The homodimer is banana-shaped. Interacts with ASIC1, ASIC2 and ASIC3. Interacts with STOML1; may redistribute STOM from the plasma membrane to late endosomes. In terms of tissue distribution, expressed in all sensory neurons of the dorsal root ganglia. In the CNS, expressed in many neurons of the spinal cord, medulla and pons. Expressed only in scattered neurons in the cortex, hippocampus, thalamus and basal ganglia. In the cerebellum, expressed in all Purkinje cells (at protein level). Widely expressed with high levels in heart, liver, skeletal muscle and testis and low levels in lung, brain and spleen.

It localises to the cell membrane. It is found in the cytoplasm. The protein resides in the cytoskeleton. Its subcellular location is the membrane raft. The protein localises to the melanosome. It localises to the cytoplasmic vesicle. Regulates ion channel activity and transmembrane ion transport. Regulates ASIC2 and ASIC3 channel activity. In Mus musculus (Mouse), this protein is Stomatin.